A 353-amino-acid chain; its full sequence is Homeobox protein Mohawk (353 aa).

Basic and acidic residues predominate over residues 18 to 27 (RGTPDRERGS). Positions 18–50 (RGTPDRERGSRTFSGFLDNPHTGPEVGIPDGPP) are disordered. The segment at residues 71–132 (VRHKRQALQD…NARRRLKNTV (62 aa)) is a DNA-binding region (homeobox; TALE-type). Disordered regions lie at residues 157-183 (LSVSSDGDSCSEDGENPPRNHMNEEGY) and 243-302 (MGKT…PSKD).

It belongs to the TALE/IRO homeobox family.

It is found in the nucleus. May act as a morphogenetic regulator of cell adhesion. Participates in the early events that lead to differentiation. In Mus musculus (Mouse), this protein is Homeobox protein Mohawk (Mkx).